Consider the following 297-residue polypeptide: tRNA uridine(34) hydroxylase (297 aa).

The Rhodanese domain maps to 137–232 (RGDDVVFFDG…YGEKYGDKGL (96 aa)). The Cysteine persulfide intermediate role is filled by Cys-192.

Belongs to the TrhO family.

The enzyme catalyses uridine(34) in tRNA + AH2 + O2 = 5-hydroxyuridine(34) in tRNA + A + H2O. Functionally, catalyzes oxygen-dependent 5-hydroxyuridine (ho5U) modification at position 34 in tRNAs. This Corynebacterium urealyticum (strain ATCC 43042 / DSM 7109) protein is tRNA uridine(34) hydroxylase.